The primary structure comprises 2822 residues: Piezo-type mechanosensitive ion channel component 2 (2822 aa).

At 1–12 the chain is on the cytoplasmic side; the sequence is MASEVVCGLIFR. The helical transmembrane segment at 13-24 threads the bilayer; that stretch reads LLLPICLAVACA. The Extracellular segment spans residues 25-30; that stretch reads FRYNGL. A helical transmembrane segment spans residues 31-43; that stretch reads SFVYLIYLLLIPL. Residues 44 to 50 are Cytoplasmic-facing; the sequence is FSEPTKA. Residues 51 to 76 form a helical membrane-spanning segment; that stretch reads TMQGHTGRLLQSLCITSLSFLLLHII. Residues 77–122 lie on the Extracellular side of the membrane; sequence FHITLASLEAQHRITPAYNCSTWEKTFRQIGFESLKGADAGNGIRV. Asn95 carries N-linked (GlcNAc...) asparagine glycosylation. A helical transmembrane segment spans residues 123 to 141; sequence FVPDIGMFIASLTIWLVCR. Residues 142 to 221 are Cytoplasmic-facing; the sequence is TIVKKPDTEE…KEFIGNMITT (80 aa). Residues 222 to 237 traverse the membrane as a helical segment; that stretch reads AGKVVVTILLGSSGMM. The Extracellular portion of the chain corresponds to 238–240; the sequence is LPS. Residues 241–258 form a helical membrane-spanning segment; the sequence is LTSAVYFFVFLGLCTWWS. The Cytoplasmic segment spans residues 259–264; that stretch reads WCRTFD. A helical membrane pass occupies residues 265–287; the sequence is PLLFGCLCVLLAIFTAGHLIGLY. Topologically, residues 288–335 are extracellular; it reads LYQFQFFQEAVPPNDYYARLFGIKSVIQTDCASTWKIIVNPDLSWYHH. The helical transmembrane segment at 336–355 threads the bilayer; it reads ANPILLLVMYYTLATLIRIW. The Cytoplasmic segment spans residues 356 to 492; the sequence is LQEPLVQEEM…SVRMHAMVAV (137 aa). Residues 450 to 481 form a disordered region; the sequence is YRWEPSEESSEKKEEEEDKREDSEGEGSQEEK. Positions 455 to 482 form a coiled coil; that stretch reads SEESSEKKEEEEDKREDSEGEGSQEEKR. Positions 463–477 are enriched in acidic residues; it reads EEEEDKREDSEGEGS. The helical transmembrane segment at 493 to 514 threads the bilayer; it reads FQFIMKQSYICALIAMMAWSIT. At 515–519 the chain is on the extracellular side; that stretch reads YHSWL. The helical transmembrane segment at 520–531 threads the bilayer; the sequence is TFVLLIWSCTLW. The Cytoplasmic portion of the chain corresponds to 532–535; sequence MIRN. The helical transmembrane segment at 536-562 threads the bilayer; the sequence is RRKYAMISSPFMVVYANLLLVLQYIWS. Residues 563–583 lie on the Extracellular side of the membrane; the sequence is FELPEIKKVPGFLEKKEPGEL. The helical transmembrane segment at 584 to 614 threads the bilayer; sequence ASKILFTITFWLLLRQHLTEQKALREKEALL. Over 615-689 the chain is Cytoplasmic; it reads SEVKIGSQEL…GNLVVALFIK (75 aa). Acidic residues-rich tracts occupy residues 624–633 and 643–652; these read LEEKEDEELQ and EKEEEEEEEI. The interval 624–668 is disordered; the sequence is LEEKEDEELQDVQVEGEPTEKEEEEEEEIKEERHEVKKEEEEEVE. Residues 653–662 show a composition bias toward basic and acidic residues; that stretch reads KEERHEVKKE. The chain crosses the membrane as a helical span at residues 690 to 703; it reads YWIYVCGGMFFFVS. Over 704–709 the chain is Extracellular; that stretch reads FEGKIV. The helical transmembrane segment at 710–728 threads the bilayer; the sequence is MYKIIYMVLFLFCVALYQV. At 729–737 the chain is on the cytoplasmic side; it reads HYEWWRKIL. The chain crosses the membrane as a helical span at residues 738 to 757; the sequence is KYFWMSVVIYTMLVLIFIYT. Topologically, residues 758–789 are extracellular; sequence YQFENFPGLWQNMTGLKKEKLEDLGLKQFTVA. A helical membrane pass occupies residues 790-811; sequence ELFTRIFIPTSFLLVCILHLHY. The Cytoplasmic portion of the chain corresponds to 812–957; that stretch reads FHDRFLELTD…QVFMWWILEL (146 aa). At Ser856 the chain carries Phosphoserine. Positions 875–901 are enriched in basic and acidic residues; that stretch reads QKLAESGEERPEECVKKTEKGEAGKDS. The interval 875-919 is disordered; sequence QKLAESGEERPEECVKKTEKGEAGKDSDESEEEEDEEEESEEEES. The span at 902–919 shows a compositional bias: acidic residues; sequence DESEEEEDEEEESEEEES. Residues 958-973 traverse the membrane as a helical segment; the sequence is HIIKIVSSYIIWVTVK. The Extracellular segment spans residues 974 to 979; sequence EVSLFN. A helical membrane pass occupies residues 980–989; the sequence is YVFLISWAFA. At 990–997 the chain is on the cytoplasmic side; that stretch reads LPYAKLRR. A helical transmembrane segment spans residues 998 to 1018; it reads AASSVCTVWTCVIIVCKMLYQ. Residues 1019–1074 lie on the Extracellular side of the membrane; sequence LQTIKPENFSVNCSLPNENQTNIPLHELNKSLLYSAPVDPTEWVGLRKSSPLLVYL. A glycan (N-linked (GlcNAc...) asparagine) is linked at Asn1030. The cysteines at positions 1031 and 1209 are disulfide-linked. A helical membrane pass occupies residues 1075–1099; it reads RNNLLMLAILAFEVTVYRHQEYYRG. The Cytoplasmic segment spans residues 1100-1140; the sequence is RNNLTAPVSKTIFHDITRLHLDDGLINCAKYFVNYFFYKFG. Residues 1141-1155 traverse the membrane as a helical segment; that stretch reads LETCFLMSVNVIGQR. Over 1156-1157 the chain is Extracellular; sequence MD. Residues 1158–1171 traverse the membrane as a helical segment; the sequence is FYAMIHACWLIGVL. The Cytoplasmic segment spans residues 1172-1182; the sequence is YRRRRKAIAEV. A helical transmembrane segment spans residues 1183-1202; it reads WPKYCCFLACIITFQYFVCI. Topologically, residues 1203–1239 are extracellular; it reads GIPPAPCRDYPWRFKGAYFNDNIIKWLYFPDFIVRPN. Residues 1240-1260 traverse the membrane as a helical segment; it reads PVFLVYDFMLLLCASLQRQIF. The Cytoplasmic segment spans residues 1261-1314; that stretch reads EDENKAAVRIMAGDNVEICMNLDAASFSQHNPVPDFIHCRSYLDMSKVIIFSYL. Residues 1315 to 1327 traverse the membrane as a helical segment; it reads FWFVLTIIFITGT. Topologically, residues 1328 to 1333 are extracellular; it reads TRISIF. Residues 1334–1346 form a helical membrane-spanning segment; the sequence is CMGYLVACFYFLL. The Cytoplasmic segment spans residues 1347–1355; that stretch reads FGGDLLLKP. The helical transmembrane segment at 1356–1381 threads the bilayer; it reads IKSILRYWDWLIAYNVFVITMKNILS. At 1382-1430 the chain is on the extracellular side; sequence IGACGYIGALVRNSCWLIQAFSLACTVKGYQMPEDDSRCKLPSGEAGII. The helical transmembrane segment at 1431-1447 threads the bilayer; it reads WDSICFAFLLLQRRVFM. Residues 1448-1991 are Cytoplasmic-facing; that stretch reads SYYFLHVVAD…YAMYNTLVAR (544 aa). A coiled-coil region spans residues 1475 to 1515; that stretch reads TIVKAVKARIEEEKKSMDQLKRQMDRIKARQQKYKKGKERM. Disordered regions lie at residues 1505–1551 and 1611–1653; these read QQKY…KKKQ and LRQR…KKSD. The segment covering 1611-1621 has biased composition (basic residues); that stretch reads LRQRRKEKKKL. Basic and acidic residues predominate over residues 1622–1633; that stretch reads AREEQKERRKGS. A helical membrane pass occupies residues 1992–2006; sequence SEMVCYFVIILNHMT. Residues 2007–2013 are Extracellular-facing; sequence SASIITL. Residues 2014–2025 traverse the membrane as a helical segment; it reads LLPILIFLWAML. The Cytoplasmic portion of the chain corresponds to 2026 to 2031; the sequence is SVPRPS. A helical membrane pass occupies residues 2032 to 2053; it reads RRFWMMAIVYTEVAIVVKYFFQ. Topologically, residues 2054–2086 are extracellular; the sequence is FGFFPWNKDLEIYKERPYFPPNIIGVEKKEGYV. A helical transmembrane segment spans residues 2087 to 2105; that stretch reads LYDLIQLLALFFHRSILKC. Residues 2106 to 2259 are Cytoplasmic-facing; sequence HGLWDEDDIV…HPDYSAVTDV (154 aa). 2 disordered regions span residues 2120-2139 and 2164-2205; these read DKEG…GSSD and IRRK…SVLS. The span at 2170-2197 shows a compositional bias: low complexity; sequence CSSSQISPRSSFSSNRSKRGSTSTRNSS. Residues 2260-2279 traverse the membrane as a helical segment; sequence YVLMFLADTVDFIIIVFGFW. Residues 2280–2301 lie on the Extracellular side of the membrane; it reads AFGKHSAAADITSSLSEDQVPG. A helical membrane pass occupies residues 2302 to 2322; that stretch reads PFLVMVLIQFGTMVVDRALYL. The Cytoplasmic portion of the chain corresponds to 2323–2326; that stretch reads RKTV. A helical transmembrane segment spans residues 2327–2350; it reads LGKVIFQVILVFGIHFWMFFILPG. The Extracellular portion of the chain corresponds to 2351–2359; it reads VTERKFSQN. Residues 2360 to 2382 form a helical membrane-spanning segment; it reads LVAQLWYFVKCVYFGLSAYQIRC. Over 2383 to 2467 the chain is Cytoplasmic; the sequence is GYPTRVLGNF…YPQPRGQKKK (85 aa). A helical membrane pass occupies residues 2468–2491; that stretch reads KAVKYGMGGMIIVLLICIVWFPLL. Residues 2492–2739 are Extracellular-facing; the sequence is FMSLIKSVAG…PSLGFLAGYG (248 aa). Asn2692 carries N-linked (GlcNAc...) asparagine glycosylation. Residues 2740–2760 traverse the membrane as a helical segment; sequence IMGLYASVVLVIGKFVREFFS. Over 2761 to 2822 the chain is Cytoplasmic; it reads GISHSIMFEE…MIKWTREKTN (62 aa).

The protein belongs to the PIEZO (TC 1.A.75) family. Homotrimer; the homotrimer forms a propeller-shaped Piezo channel with a cation-ion conducting pore. Heterotrimeric interaction may occur between PIEZO1 and PIEZO2. Interacts with STOM13. Interacts with TMC7; the interaction inhibits PIEZO2-conducted mechanically activated currents. Interacts with TMC1; the interaction may be part of the MET complex. Interacts with MDFIC (via C-terminus); the interaction prolongs Piezo channel inactivation. Interacts with MDFI (via C-terminus); the interaction prolongs Piezo channel inactivation. As to expression, expressed in bladder, colon, and lung, but less abundant in kidney or skin. Strong expression is observed in dorsal root ganglia (DRG) sensory neurons. Expressed in a wide range of cutaneous low-threshold mechanoreceptors (LTMRs), including Merkel cells and Meissner's corpuscles. Expressed in sensory neurons. Expressed in cochlear inner and outer hair cells and vestibular organ hair cells. Expressed in pulmonary neuroepithelial cell bodies. Expressed in bladder urothelium and sensory neurons of the lower urinary tract. Expressed in sensory endings of proprioceptors innervating muscle spindles and Golgi tendon organs.

Its subcellular location is the cell membrane. The enzyme catalyses Ca(2+)(in) = Ca(2+)(out). Its activity is regulated as follows. Regulated by auxillary subunits MDFIC and MDFI. Channel activity is inhibited by TMEM120aa. Phosphatidic acid and lysophosphatidic acid inhibit Piezo2 channel activity. Its function is as follows. Pore-forming subunit of the mechanosensitive non-specific cation Piezo channel required for rapidly adapting mechanically activated (MA) currents and has a key role in sensing touch and tactile pain. Piezo channels are homotrimeric three-blade propeller-shaped structures that utilize a cap-motion and plug-and-latch mechanism to gate their ion-conducting pathways. Expressed in sensory neurons, is essential for diverse physiological processes, including respiratory control, systemic metabolism, urinary function, and proprioception. Mediates airway stretch sensing, enabling efficient respiration at birth and maintaining normal breathing in adults. It regulates brown and beige adipose tissue morphology and function, preventing systemic hypermetabolism. In the lower urinary tract, acts as a sensor in both the bladder urothelium and innervating sensory neurons and is required for bladder-stretch sensing and urethral micturition reflexes, ensuring proper urinary function. Additionally, Piezo2 serves as the principal mechanotransducer in proprioceptors, facilitating proprioception and coordinated body movements. In inner ear hair cells, PIEZO1/2 subunits may constitute part of the mechanotransducer (MET) non-selective cation channel complex where they may act as pore-forming ion-conducting component in the complex. Required for Merkel-cell mechanotransduction. Plays a major role in light-touch mechanosensation. In Mus musculus (Mouse), this protein is Piezo-type mechanosensitive ion channel component 2.